The chain runs to 229 residues: CRISPR pre-crRNA endoribonuclease Cas5d (229 aa).

Belongs to the CRISPR-associated protein Cas5 family. Subtype I-C/Dvulg subfamily. It depends on Does not require a metal cofactor. as a cofactor.

CRISPR (clustered regularly interspaced short palindromic repeat) is an adaptive immune system that provides protection against mobile genetic elements (viruses, transposable elements and conjugative plasmids). CRISPR clusters contain spacers, sequences complementary to antecedent mobile elements, and target invading nucleic acids. CRISPR clusters are transcribed and processed into CRISPR RNA (crRNA). This protein is a sequence-specific endonuclease that cleaves pre-crRNA into mature crRNA, possibly by an intramolecular attack of the 2'-hydroxyl group of G26 on the scissile phosphodiester, cutting the precursor 3' to G26 residue yielding 5'-hydroxyl and 2' and/or 3' ends lacking a hydroxyl group (perhaps a 2'/3' cyclic phosphodiester). Requires between 4 and 8 nt downstream of the cleavage site for both binding and cleavage of pre-crRNA. Substitution with dG at this position abolishes cleavage but not RNA binding. Does not cleave pre-crRNA associated with the M.succiniciproducens strain MBEL55E Cas5 protein (AC Q65TW5) CRISPR locus. The sequence is that of CRISPR pre-crRNA endoribonuclease Cas5d from Thermus thermophilus (strain ATCC BAA-163 / DSM 7039 / HB27).